Reading from the N-terminus, the 418-residue chain is Serine hydroxymethyltransferase (418 aa).

(6S)-5,6,7,8-tetrahydrofolate is bound by residues L121 and 125 to 127; that span reads GHL. The residue at position 230 (K230) is an N6-(pyridoxal phosphate)lysine. 355 to 357 is a (6S)-5,6,7,8-tetrahydrofolate binding site; that stretch reads SPF.

The protein belongs to the SHMT family. Homodimer. Pyridoxal 5'-phosphate serves as cofactor.

It localises to the cytoplasm. It carries out the reaction (6R)-5,10-methylene-5,6,7,8-tetrahydrofolate + glycine + H2O = (6S)-5,6,7,8-tetrahydrofolate + L-serine. It participates in one-carbon metabolism; tetrahydrofolate interconversion. It functions in the pathway amino-acid biosynthesis; glycine biosynthesis; glycine from L-serine: step 1/1. Catalyzes the reversible interconversion of serine and glycine with tetrahydrofolate (THF) serving as the one-carbon carrier. This reaction serves as the major source of one-carbon groups required for the biosynthesis of purines, thymidylate, methionine, and other important biomolecules. Also exhibits THF-independent aldolase activity toward beta-hydroxyamino acids, producing glycine and aldehydes, via a retro-aldol mechanism. The protein is Serine hydroxymethyltransferase of Streptococcus pyogenes serotype M3 (strain ATCC BAA-595 / MGAS315).